Reading from the N-terminus, the 25-residue chain is Large ribosomal subunit protein uL30 (25 aa).

It belongs to the universal ribosomal protein uL30 family. As to quaternary structure, part of the 50S ribosomal subunit.

The protein is Large ribosomal subunit protein uL30 (rpmD) of Pseudomonas putida (Arthrobacter siderocapsulatus).